A 231-amino-acid chain; its full sequence is Large ribosomal subunit protein uL1 (231 aa).

It belongs to the universal ribosomal protein uL1 family. In terms of assembly, part of the 50S ribosomal subunit.

In terms of biological role, binds directly to 23S rRNA. The L1 stalk is quite mobile in the ribosome, and is involved in E site tRNA release. Its function is as follows. Protein L1 is also a translational repressor protein, it controls the translation of the L11 operon by binding to its mRNA. The protein is Large ribosomal subunit protein uL1 of Stutzerimonas stutzeri (strain A1501) (Pseudomonas stutzeri).